The following is a 436-amino-acid chain: Chromosomal replication initiator protein DnaA (436 aa).

The tract at residues 1–80 (MSHEAVWQHV…QAPRFELRVV (80 aa)) is domain I, interacts with DnaA modulators. Residues 80-100 (VPGVVVQEDIFQAAPAEAPRP) are domain II. Residues 101–317 (KLNPKYTFEN…GALMRAIAFA (217 aa)) form a domain III, AAA+ region region. ATP is bound by residues G145, G147, K148, and T149. A domain IV, binds dsDNA region spans residues 318 to 436 (SLNGVELTRA…LLRTLREACT (119 aa)).

Belongs to the DnaA family. Oligomerizes as a right-handed, spiral filament on DNA at oriC.

The protein localises to the cytoplasm. Its function is as follows. Plays an essential role in the initiation and regulation of chromosomal replication. ATP-DnaA binds to the origin of replication (oriC) to initiate formation of the DNA replication initiation complex once per cell cycle. Binds the DnaA box (a 9 base pair repeat at the origin) and separates the double-stranded (ds)DNA. Forms a right-handed helical filament on oriC DNA; dsDNA binds to the exterior of the filament while single-stranded (ss)DNA is stabiized in the filament's interior. The ATP-DnaA-oriC complex binds and stabilizes one strand of the AT-rich DNA unwinding element (DUE), permitting loading of DNA polymerase. After initiation quickly degrades to an ADP-DnaA complex that is not apt for DNA replication. Binds acidic phospholipids. The polypeptide is Chromosomal replication initiator protein DnaA (Thermus thermophilus (strain ATCC BAA-163 / DSM 7039 / HB27)).